We begin with the raw amino-acid sequence, 189 residues long: Probable nicotinate-nucleotide adenylyltransferase (189 aa).

The protein belongs to the NadD family.

It carries out the reaction nicotinate beta-D-ribonucleotide + ATP + H(+) = deamido-NAD(+) + diphosphate. It functions in the pathway cofactor biosynthesis; NAD(+) biosynthesis; deamido-NAD(+) from nicotinate D-ribonucleotide: step 1/1. Catalyzes the reversible adenylation of nicotinate mononucleotide (NaMN) to nicotinic acid adenine dinucleotide (NaAD). The polypeptide is Probable nicotinate-nucleotide adenylyltransferase (Staphylococcus aureus (strain N315)).